The sequence spans 201 residues: Translation machinery-associated protein 22 (201 aa).

Residues 104 to 175 form the SUI1 domain; that stretch reads VTVKRIERNK…EIKEFIVEKY (72 aa).

Belongs to the DENR family. As to quaternary structure, interacts with the 40S ribosomal subunit.

Its subcellular location is the cytoplasm. In Pyricularia oryzae (strain 70-15 / ATCC MYA-4617 / FGSC 8958) (Rice blast fungus), this protein is Translation machinery-associated protein 22 (TMA22).